A 112-amino-acid chain; its full sequence is UPF0122 protein CPF_1968 (112 aa).

The protein belongs to the UPF0122 family.

Its function is as follows. Might take part in the signal recognition particle (SRP) pathway. This is inferred from the conservation of its genetic proximity to ftsY/ffh. May be a regulatory protein. This chain is UPF0122 protein CPF_1968, found in Clostridium perfringens (strain ATCC 13124 / DSM 756 / JCM 1290 / NCIMB 6125 / NCTC 8237 / Type A).